A 1185-amino-acid chain; its full sequence is AT-rich interactive domain-containing protein 5B (1185 aa).

Disordered regions lie at residues 248-281 (PNLK…ESKA), 413-550 (KGEE…PDED), 713-742 (ISKK…PIAI), 883-932 (HQQE…EGKG), and 1033-1058 (HLPK…LHGL). Over residues 252–261 (GRPRKKKPCP) the composition is skewed to basic residues. The region spanning 321 to 413 (RADEQAFLVA…LILPYERFIK (93 aa)) is the ARID domain. The segment covering 447–461 (IKNENQKSKKEKDNA) has biased composition (basic and acidic residues). Residues 462–471 (QKPQDASEVS) are compositionally biased toward polar residues. Residues 473-487 (EQEKDQESADQKNFT) are compositionally biased toward basic and acidic residues. Positions 1034 to 1053 (LPKETSVKEKVPDAEGEGSK) are enriched in basic and acidic residues.

It belongs to the ARID5B family.

The protein localises to the nucleus. Its function is as follows. Transcription coactivator that binds to the 5'-AATA[CT]-3' core sequence and plays a key role in adipogenesis and liver development. Required for adipogenesis: regulates triglyceride metabolism in adipocytes by regulating expression of adipogenic genes. The chain is AT-rich interactive domain-containing protein 5B (ARID5B) from Gallus gallus (Chicken).